The chain runs to 2336 residues: Voltage-dependent N-type calcium channel subunit alpha-1B (2336 aa).

Residues 1 to 37 (MVRFGDELGGRYGGTGGGERARGGGAGGAGGPGQGGL) are disordered. Residues 1–90 (MVRFGDELGG…DNVVRKYAKR (90 aa)) are Cytoplasmic-facing. A compositionally biased stretch (gly residues) spans 10–37 (GRYGGTGGGERARGGGAGGAGGPGQGGL). Arginine 22 is modified (omega-N-methylarginine). The stretch at 82 to 359 (NVVRKYAKRI…LVLGVLSGEF (278 aa)) is one I repeat. A helical transmembrane segment spans residues 91–114 (ITEWPPFEYMILATIIANCIVLAL). Topologically, residues 115–131 (EQHLPDGDKTPMSERLD) are extracellular. A helical transmembrane segment spans residues 132–152 (DTEPYFIGIFCFEAGIKIIAL). At 153–163 (GFVFHKGSYLR) the chain is on the cytoplasmic side. The helical transmembrane segment at 164–182 (NGWNVMDFVVVLTEILATA) threads the bilayer. Residues 183-187 (GTDFD) are Extracellular-facing. Residues 188 to 211 (LRTLRAVRVLRPLKLVSGIPSLQV) form a helical membrane-spanning segment. Over 212 to 221 (VLKSIMKAMV) the chain is Cytoplasmic. The helical transmembrane segment at 222–244 (PLLQIGLLLFFAILMFAIIGLEF) threads the bilayer. At 245-331 (YMGKFHKACF…NTNDAAGNTW (87 aa)) the chain is on the extracellular side. N-linked (GlcNAc...) asparagine glycosylation is present at asparagine 256. A helical transmembrane segment spans residues 332–356 (NWLYFIPLIIIGSFFMLNLVLGVLS). The Cytoplasmic segment spans residues 357 to 483 (GEFAKERERV…FLIRRMVKAQ (127 aa)). Residues 379–396 (QQIERELNGYLEWIFKAE) form a binding to the beta subunit region. Serine 411 is subject to Phosphoserine. Residue 452-459 (ASLKSGKT) coordinates ATP. Residues 469–713 (EKMFRFLIRR…VFLAIAVDNL (245 aa)) form an II repeat. A helical membrane pass occupies residues 484–502 (SFYWVVLCVVALNTLCVAM). Topologically, residues 503-512 (VHYNQPQRLT) are extracellular. Residues 513–535 (TALYFAEFVFLGLFLTEMSLKMY) form a helical membrane-spanning segment. The Cytoplasmic segment spans residues 536–545 (GLGPRSYFRS). Serine 545 is a binding site for a 1,2-diacyl-sn-glycero-3-phospho-(1D-myo-inositol-4,5-bisphosphate). A helical transmembrane segment spans residues 546 to 567 (SFNCFDFGVIVGSIFEVVWAAI). Residues 568 to 574 (KPGTSFG) are Extracellular-facing. The chain crosses the membrane as a helical span at residues 575–587 (ISVLRALRLLRIF). A 1,2-diacyl-sn-glycero-3-phospho-(1D-myo-inositol-4,5-bisphosphate) is bound by residues arginine 585 and lysine 588. Residues 588 to 605 (KVTKYWNSLRNLVVSLLN) lie on the Cytoplasmic side of the membrane. The helical transmembrane segment at 606–631 (SMKSIISLLFLLFLFIVVFALLGMQL) threads the bilayer. Over 632 to 683 (FGGQFNFQDETPTTNFDTFPAAILTVFQILTGEDWNAVMYHGIESQGGVSKG) the chain is Extracellular. A helical membrane pass occupies residues 684-710 (MFSSFYFIVLTLFGNYTLLNVFLAIAV). Residues 711–1149 (DNLANAQELT…FCHYIVTMRY (439 aa)) lie on the Cytoplasmic side of the membrane. 3 positions are modified to phosphoserine: serine 746, serine 749, and serine 784. 2 disordered regions span residues 800 to 1021 (YAST…HQPK) and 1051 to 1076 (EQPEDADNQRNVTRMGSQPSDPSTTV). Basic and acidic residues-rich tracts occupy residues 806–827 (VRPDMKTHMDRPLVVEPGRDGL), 870–891 (EQDRTDCPKAESTETGAREERA), 920–930 (GSPEEATEREP), 938–948 (HAQDSSKEGKE), 970–981 (GPRETENSEEPT), and 996–1021 (PPEREVAEKESNVVEGDKETRNHQPK). Over residues 1059–1076 (QRNVTRMGSQPSDPSTTV) the composition is skewed to polar residues. Phosphoserine is present on serine 1067. The stretch at 1135-1421 (NLLRRFCHYI…IFVALIIITF (287 aa)) is one III repeat. Residues 1150 to 1168 (FEMVILVVIALSSIALAAE) traverse the membrane as a helical segment. The Extracellular portion of the chain corresponds to 1169-1176 (DPVRTDSF). The chain crosses the membrane as a helical span at residues 1177–1201 (RNNALKYMDYIFTGVFTFEMVIKMI). Residues 1202 to 1215 (DLGLLLHPGAYFRD) lie on the Cytoplasmic side of the membrane. The helical transmembrane segment at 1216-1240 (LWNILDFIVVSGALVAFAFSSFMGG) threads the bilayer. The Extracellular portion of the chain corresponds to 1241–1246 (SKGKDI). The helical transmembrane segment at 1247–1267 (NTIKSLRVLRVLRPLKTIKRL) threads the bilayer. At 1268 to 1285 (PKLKAVFDCVVNSLKNVL) the chain is on the cytoplasmic side. The helical transmembrane segment at 1286 to 1305 (NILIVYMLFMFIFAVIAVQL) threads the bilayer. Topologically, residues 1306-1392 (FKGKFFYCTD…EQGPSPGFRM (87 aa)) are extracellular. The chain crosses the membrane as a helical span at residues 1393–1418 (ELSIFYVVYFVVFPFFFVNIFVALII). At 1419-1473 (ITFQEQGDKVMSECSLEKNERACIDFAISAKPLTRYMPQNKQSFQYKTWTFVVSP) the chain is on the cytoplasmic side. The IV repeat unit spans residues 1458–1711 (NKQSFQYKTW…LFVAVIMDNF (254 aa)). Residues 1474-1492 (PFEYFIMAMIALNTVVLMM) traverse the membrane as a helical segment. Topologically, residues 1493-1500 (KFYDAPYE) are extracellular. Residues 1501–1525 (YELMLKCLNIVFTSMFSLECILKII) traverse the membrane as a helical segment. Topologically, residues 1526–1535 (AFGVLNYFRD) are cytoplasmic. A helical membrane pass occupies residues 1536–1557 (AWNVFDFVTVLGSITDILVTEI). Topologically, residues 1558 to 1563 (ANNFIN) are extracellular. Asparagine 1563 is a glycosylation site (N-linked (GlcNAc...) asparagine). Residues 1564–1582 (LSFLRLFRAARLIKLCRQG) traverse the membrane as a helical segment. Over 1583 to 1601 (YTIRILLWTFVQSFKALPY) the chain is Cytoplasmic. A helical transmembrane segment spans residues 1602-1621 (VCLLIAMLFFIYAIIGMQVF). The Extracellular portion of the chain corresponds to 1622-1683 (GNIALDDGTS…ANASECGSDF (62 aa)). Asparagine 1675 carries N-linked (GlcNAc...) asparagine glycosylation. The helical transmembrane segment at 1684–1707 (AYFYFVSFIFLCSFLMLNLFVAVI) threads the bilayer. Residues 1708–2336 (MDNFEYLTRD…YHHPDQDHWC (629 aa)) lie on the Cytoplasmic side of the membrane. The EF-hand domain maps to 1724–1759 (HHLDEFIRVWAEYDPAACGRISYNDMFEMLKHMSPP). Residues aspartate 1737, arginine 1743, and aspartate 1748 each coordinate Ca(2+). The tract at residues 1981 to 2202 (TLRGPDGEPQ…TPRPSITYKT (222 aa)) is disordered. Residues 2048 to 2062 (SHHHHHRCHRRRDKK) show a composition bias toward basic residues. Serine 2065 is subject to Phosphoserine. Residues 2097–2113 (CRRERKQERGRSQERRQ) are compositionally biased toward basic and acidic residues. A compositionally biased stretch (polar residues) spans 2161-2177 (GSGSVNGSPLMSTSGAS). 3 positions are modified to phosphoserine: serine 2221, serine 2230, and serine 2253.

This sequence belongs to the calcium channel alpha-1 subunit (TC 1.A.1.11) family. CACNA1B subfamily. As to quaternary structure, multisubunit complex consisting of alpha-1, alpha-2, beta and delta subunits in a 1:1:1:1 ratio. The channel activity is directed by the pore-forming and voltage-sensitive alpha-1 subunit. In many cases, this subunit is sufficient to generate voltage-sensitive calcium channel activity. The auxiliary subunits beta and alpha-2/delta linked by a disulfide bridge regulate the channel activity. Interacts with RIMS1. Interacts with FMR1 (via C-terminus); this interaction induces a decrease in the number of presynaptic functional CACNA1B channels at the cell surface. Post-translationally, phosphorylated in vitro by CaM-kinase II, PKA, PKC and CGPK. As to expression, central nervous system.

It is found in the membrane. It carries out the reaction Ca(2+)(in) = Ca(2+)(out). Is specifically blocked by omega-conotoxin GVIA. Is specifically blocked by omega-conotoxin MVIIA (ziconotide). Is insensitive to dihydropyridines (DHP). Voltage-sensitive calcium channels (VSCC) mediate the entry of calcium ions into excitable cells and are also involved in a variety of calcium-dependent processes, including muscle contraction, hormone or neurotransmitter release, gene expression, cell motility, cell division and cell death. This alpha-1B subunit gives rise to N-type calcium currents. N-type calcium channels belong to the 'high-voltage activated' (HVA) group. They are involved in pain signaling. Calcium channels containing alpha-1B subunit may play a role in directed migration of immature neurons. Mediates Ca(2+) release probability at hippocampal neuronal soma and synaptic terminals. This chain is Voltage-dependent N-type calcium channel subunit alpha-1B (Cacna1b), found in Rattus norvegicus (Rat).